The chain runs to 147 residues: Large ribosomal subunit protein uL22 (147 aa).

This sequence belongs to the universal ribosomal protein uL22 family. As to quaternary structure, part of the 50S ribosomal subunit.

In terms of biological role, this protein binds specifically to 23S rRNA; its binding is stimulated by other ribosomal proteins, e.g. L4, L17, and L20. It is important during the early stages of 50S assembly. It makes multiple contacts with different domains of the 23S rRNA in the assembled 50S subunit and ribosome. Functionally, the globular domain of the protein is located near the polypeptide exit tunnel on the outside of the subunit, while an extended beta-hairpin is found that lines the wall of the exit tunnel in the center of the 70S ribosome. The protein is Large ribosomal subunit protein uL22 of Fervidobacterium nodosum (strain ATCC 35602 / DSM 5306 / Rt17-B1).